The primary structure comprises 463 residues: Phosphoglucosamine mutase (463 aa).

Ser102 acts as the Phosphoserine intermediate in catalysis. 4 residues coordinate Mg(2+): Ser102, Asp240, Asp242, and Asp244. A Phosphoserine modification is found at Ser102.

Belongs to the phosphohexose mutase family. Mg(2+) is required as a cofactor. In terms of processing, activated by phosphorylation.

The enzyme catalyses alpha-D-glucosamine 1-phosphate = D-glucosamine 6-phosphate. Its function is as follows. Catalyzes the conversion of glucosamine-6-phosphate to glucosamine-1-phosphate. The sequence is that of Phosphoglucosamine mutase from Mycobacterium leprae (strain Br4923).